Here is a 921-residue protein sequence, read N- to C-terminus: Eukaryotic translation initiation factor 3 subunit A (921 aa).

The 175-residue stretch at F319–F493 folds into the PCI domain. The disordered stretch occupies residues G497–E524. A compositionally biased stretch (basic and acidic residues) spans D506–T517. 2 coiled-coil regions span residues A562–T647 and E693–N868. Positions A818–I865 are enriched in basic and acidic residues. Residues A818–A921 form a disordered region. Positions P873 to R890 are enriched in pro residues. The span at P903–M913 shows a compositional bias: basic and acidic residues.

It belongs to the eIF-3 subunit A family. Component of the eukaryotic translation initiation factor 3 (eIF-3) complex.

The protein resides in the cytoplasm. In terms of biological role, RNA-binding component of the eukaryotic translation initiation factor 3 (eIF-3) complex, which is involved in protein synthesis of a specialized repertoire of mRNAs and, together with other initiation factors, stimulates binding of mRNA and methionyl-tRNAi to the 40S ribosome. The eIF-3 complex specifically targets and initiates translation of a subset of mRNAs involved in cell proliferation. The polypeptide is Eukaryotic translation initiation factor 3 subunit A (Eremothecium gossypii (strain ATCC 10895 / CBS 109.51 / FGSC 9923 / NRRL Y-1056) (Yeast)).